The following is a 305-amino-acid chain: MDFSPVGEESLGVRSMCFYVETRDVRILFDAGVSLAPRRFGLPPHPRELERARAVRAEILRLAEAADVVTVSHYHRDHFTPWYPSVYMATDGEMYKRVYGGKRVLLKSPQDLNWSQRRRHYGLSKALREAGAEAVYADGGEWAFGGTRVAASPPLWHGPAGSKTGRVLGFAVSDGEERLVFLPDVEGPLEPEPIAFARGARPTVVVVGGPPTYLGWDLEKAVKNLAELVELRPHTLVLAHHLLRDVQWREKVAPLFELAERRGVVVATYASLAGRPEELLEARRRELYAEEPAAVAEAGEGEEED.

It belongs to the UPF0282 family.

The polypeptide is UPF0282 protein Tneu_0934 (Pyrobaculum neutrophilum (strain DSM 2338 / JCM 9278 / NBRC 100436 / V24Sta) (Thermoproteus neutrophilus)).